The following is a 351-amino-acid chain: Formyl peptide receptor 2 (351 aa).

At 1 to 29 the chain is on the extracellular side; that stretch reads MESNYSIHLNGSEVVVYDSTISRVLWILS. 2 N-linked (GlcNAc...) asparagine glycosylation sites follow: Asn4 and Asn10. Residues 30-50 form a helical membrane-spanning segment; that stretch reads MVVVSITFFLGVLGNGLVIWV. Residues 51–61 lie on the Cytoplasmic side of the membrane; that stretch reads AGFRMPHTVTT. A helical membrane pass occupies residues 62–82; the sequence is IWYLNLALADFSFTATLPFLL. Residues 83–99 are Extracellular-facing; it reads VEMAMKEKWPFGWFLCK. A disulfide bridge connects residues Cys98 and Cys176. A helical membrane pass occupies residues 100–120; the sequence is LVHIVVDVNLFGSVFLIALIA. Topologically, residues 121–144 are cytoplasmic; sequence LDRCICVLHPVWAQNHRTVSLARK. Residues 145–165 form a helical membrane-spanning segment; that stretch reads VVVGPWIFALILTLPIFIFLT. The Extracellular segment spans residues 166–205; it reads TVRIPGGDVYCTFNFGSWAQTDEEKLNTAITFVTTRGIIR. The helical transmembrane segment at 206–226 threads the bilayer; sequence FLIGFSMPMSIVAVCYGLIAV. The Cytoplasmic segment spans residues 227–241; the sequence is KINRRNLVNSSRPLR. A helical transmembrane segment spans residues 242–262; that stretch reads VLTAVVASFFICWFPFQLVAL. Residues 263-282 are Extracellular-facing; that stretch reads LGTVWFKETLLSGSYKILDM. Residues 283-305 form a helical membrane-spanning segment; the sequence is FVNPTSSLAYFNSCLNPMLYVFM. Over 306-351 the chain is Cytoplasmic; sequence GQDFRERFIHSLPYSLERALSEDSGQTSDSSTSSTSPPADIELKAP. The disordered stretch occupies residues 325–351; the sequence is LSEDSGQTSDSSTSSTSPPADIELKAP. Residues 327–341 are compositionally biased toward low complexity; that stretch reads EDSGQTSDSSTSSTS.

The protein belongs to the G-protein coupled receptor 1 family. Interacts with Amyloid-beta protein 42, product of APP; the interaction takes place at the cell surface and the complex is then rapidly internalized. Primarily expressed in neutrophils. Not detected in vomeronasal neurons.

The protein localises to the cell membrane. In terms of biological role, high affinity receptor for N-formyl-methionyl peptides (FMLP), which are powerful neutrophil chemotactic factors. Stimulates chemotaxis in immune cells to site of infection or tissue damage upon recognition of several ligands, such as FMLP, or ligand involved in cell damage, disease or inflammation. Receptor for the chemokine-like protein FAM19A5, mediating FAM19A5-stimulated macrophage chemotaxis and the inhibitory effect on TNFSF11/RANKL-induced osteoclast differentiation. The chain is Formyl peptide receptor 2 (Fpr2) from Mus musculus (Mouse).